Reading from the N-terminus, the 527-residue chain is MASDFLPVRRALLSVSDKTGLIDLARALVARNVELLSTGGTAKAIREAGLPVKDVAELTGFPEMMDGRVKTLHPLVHGGLLGRAGIDEAVMAEHGIAPIDLLVLNLYPFESVTVKTDCTLADAVENIDIGGPAMLRSAAKNFARVAVATDPAQYADLLAELEANNGQLSAAKRFALSVAAFNRVAQYDAAISNYLSAVADSAETVPTRNPFPAQINSNFVKVMDLRYGENPHQSGAFYRDLYPVPGTLATFQQLQGKELSYNNLADADAAWECVRQFDAPACVIVKHANPCGVAVGAGCGDAYELAYATDPTSAFGGILAFNKTLDAATAKAILDRQFVEVLIAPDYDAGALDYATKKANVRVLKIPHGNGLNNYDTKRIGSGLLMQSADNRGMSLGELSVVTQRAPSEAELGDLLFAWRVAKYVKSNAIVYAKDSRTIGVGAGQMSRVVSAKIAALKAEEAKLTVVGSVMASDAFFPFRDGIDAAASAGIQAVIQPGGSMRDGEVIAAADEHGIAMVFTGVRHFRH.

Residues 1–149 (MASDFLPVRR…KNFARVAVAT (149 aa)) enclose the MGS-like domain.

It belongs to the PurH family.

The enzyme catalyses (6R)-10-formyltetrahydrofolate + 5-amino-1-(5-phospho-beta-D-ribosyl)imidazole-4-carboxamide = 5-formamido-1-(5-phospho-D-ribosyl)imidazole-4-carboxamide + (6S)-5,6,7,8-tetrahydrofolate. The catalysed reaction is IMP + H2O = 5-formamido-1-(5-phospho-D-ribosyl)imidazole-4-carboxamide. The protein operates within purine metabolism; IMP biosynthesis via de novo pathway; 5-formamido-1-(5-phospho-D-ribosyl)imidazole-4-carboxamide from 5-amino-1-(5-phospho-D-ribosyl)imidazole-4-carboxamide (10-formyl THF route): step 1/1. Its pathway is purine metabolism; IMP biosynthesis via de novo pathway; IMP from 5-formamido-1-(5-phospho-D-ribosyl)imidazole-4-carboxamide: step 1/1. In Xanthomonas oryzae pv. oryzae (strain KACC10331 / KXO85), this protein is Bifunctional purine biosynthesis protein PurH.